The primary structure comprises 2561 residues: Plipastatin synthase subunit A (2561 aa).

The domain 1 (glutamate-activating) stretch occupies residues 1–1038 (MSEHTYSLTH…ATVIREGTDS (1038 aa)). The condensation 1 stretch occupies residues 2-300 (SEHTYSLTHA…SSLPIRITVD (299 aa)). The tract at residues 485 to 888 (TYAELDMYAS…SIEGVREAAV (404 aa)) is adenylation 1. The 76-residue stretch at 961 to 1036 (APRNVTEMKL…GLATVIREGT (76 aa)) folds into the Carrier 1 domain. Ser-996 is subject to O-(pantetheine 4'-phosphoryl)serine. A condensation 2 region spans residues 1048–1338 (KQETYPVSSA…NTLALRTRPE (291 aa)). Residues 1048-2554 (KQETYPVSSA…ELTLSALSSI (1507 aa)) are domain 2 (D-ornithine-activating). Positions 1525 to 1932 (SYRLLNERAN…QTGLVREAAV (408 aa)) are adenylation 2. Residues 2007-2081 (APVNDLQKTM…ELCGHITPLA (75 aa)) form the Carrier 2 domain. The residue at position 2042 (Ser-2042) is an O-(pantetheine 4'-phosphoryl)serine. The interval 2089 to 2554 (AEGEAELTPI…ELTLSALSSI (466 aa)) is epimerization.

This sequence belongs to the ATP-dependent AMP-binding enzyme family. Pantetheine 4'-phosphate serves as cofactor.

Functionally, this protein is a multifunctional enzyme, able to activate and polymerize the amino acids Glu and Orn as part of the biosynthesis of the lipopeptide antibiotic lipastatin. The Orn residue is further epimerized to the D-isomer form. The activation sites for these amino acids consist of individual domains. The protein is Plipastatin synthase subunit A (ppsA) of Bacillus subtilis (strain 168).